Consider the following 139-residue polypeptide: Large-conductance mechanosensitive channel (139 aa).

Helical transmembrane passes span 14–34 (VVDLAVGVIIGAAFGAIVNSA), 38–58 (IFMPVIGAITGGLDFSNYYIP), and 82–102 (GQFLTLTLNFAIVAFVLFLVI).

This sequence belongs to the MscL family. In terms of assembly, homopentamer.

The protein localises to the cell inner membrane. Functionally, channel that opens in response to stretch forces in the membrane lipid bilayer. May participate in the regulation of osmotic pressure changes within the cell. In Methylobacterium radiotolerans (strain ATCC 27329 / DSM 1819 / JCM 2831 / NBRC 15690 / NCIMB 10815 / 0-1), this protein is Large-conductance mechanosensitive channel.